The sequence spans 231 residues: Phosphatidylserine decarboxylase proenzyme (231 aa).

Catalysis depends on S200, which acts as the Schiff-base intermediate with substrate; via pyruvic acid. S200 carries the pyruvic acid (Ser); by autocatalysis modification.

It belongs to the phosphatidylserine decarboxylase family. PSD-A subfamily. As to quaternary structure, heterodimer of a large membrane-associated beta subunit and a small pyruvoyl-containing alpha subunit. Pyruvate serves as cofactor. Post-translationally, is synthesized initially as an inactive proenzyme. Formation of the active enzyme involves a self-maturation process in which the active site pyruvoyl group is generated from an internal serine residue via an autocatalytic post-translational modification. Two non-identical subunits are generated from the proenzyme in this reaction, and the pyruvate is formed at the N-terminus of the alpha chain, which is derived from the carboxyl end of the proenzyme. The post-translation cleavage follows an unusual pathway, termed non-hydrolytic serinolysis, in which the side chain hydroxyl group of the serine supplies its oxygen atom to form the C-terminus of the beta chain, while the remainder of the serine residue undergoes an oxidative deamination to produce ammonia and the pyruvoyl prosthetic group on the alpha chain.

The protein resides in the cell membrane. The catalysed reaction is a 1,2-diacyl-sn-glycero-3-phospho-L-serine + H(+) = a 1,2-diacyl-sn-glycero-3-phosphoethanolamine + CO2. It functions in the pathway phospholipid metabolism; phosphatidylethanolamine biosynthesis; phosphatidylethanolamine from CDP-diacylglycerol: step 2/2. In terms of biological role, catalyzes the formation of phosphatidylethanolamine (PtdEtn) from phosphatidylserine (PtdSer). This chain is Phosphatidylserine decarboxylase proenzyme, found in Mycobacterium tuberculosis (strain ATCC 25177 / H37Ra).